The primary structure comprises 482 residues: Ribulose bisphosphate carboxylase large chain (482 aa).

Residues 1–2 (MS) constitute a propeptide that is removed on maturation. Pro-3 carries the post-translational modification N-acetylproline. Position 14 is an N6,N6,N6-trimethyllysine (Lys-14). The substrate site is built by Asn-123 and Thr-173. The active-site Proton acceptor is the Lys-175. Position 177 (Lys-177) interacts with substrate. Lys-201, Asp-203, and Glu-204 together coordinate Mg(2+). Position 201 is an N6-carboxylysine (Lys-201). The Proton acceptor role is filled by His-294. Residues Arg-295, His-327, and Ser-379 each contribute to the substrate site.

This sequence belongs to the RuBisCO large chain family. Type I subfamily. In terms of assembly, heterohexadecamer of 8 large chains and 8 small chains; disulfide-linked. The disulfide link is formed within the large subunit homodimers. Mg(2+) is required as a cofactor. In terms of processing, the disulfide bond which can form in the large chain dimeric partners within the hexadecamer appears to be associated with oxidative stress and protein turnover.

The protein localises to the plastid. Its subcellular location is the chloroplast. It catalyses the reaction 2 (2R)-3-phosphoglycerate + 2 H(+) = D-ribulose 1,5-bisphosphate + CO2 + H2O. The enzyme catalyses D-ribulose 1,5-bisphosphate + O2 = 2-phosphoglycolate + (2R)-3-phosphoglycerate + 2 H(+). Its function is as follows. RuBisCO catalyzes two reactions: the carboxylation of D-ribulose 1,5-bisphosphate, the primary event in carbon dioxide fixation, as well as the oxidative fragmentation of the pentose substrate in the photorespiration process. Both reactions occur simultaneously and in competition at the same active site. The chain is Ribulose bisphosphate carboxylase large chain from Stegnosperma halimifolium.